We begin with the raw amino-acid sequence, 126 residues long: Glycine cleavage system H protein (126 aa).

The 82-residue stretch at 24–105 (TLTVGITDHA…AYGVWLFKIK (82 aa)) folds into the Lipoyl-binding domain. N6-lipoyllysine is present on Lys65.

The protein belongs to the GcvH family. The glycine cleavage system is composed of four proteins: P, T, L and H. (R)-lipoate is required as a cofactor.

In terms of biological role, the glycine cleavage system catalyzes the degradation of glycine. The H protein shuttles the methylamine group of glycine from the P protein to the T protein. This Burkholderia ambifaria (strain MC40-6) protein is Glycine cleavage system H protein.